A 90-amino-acid polypeptide reads, in one-letter code: Small ribosomal subunit protein bS20 (90 aa).

This sequence belongs to the bacterial ribosomal protein bS20 family.

In terms of biological role, binds directly to 16S ribosomal RNA. This chain is Small ribosomal subunit protein bS20, found in Francisella philomiragia subsp. philomiragia (strain ATCC 25017 / CCUG 19701 / FSC 153 / O#319-036).